Reading from the N-terminus, the 585-residue chain is Parathyroid hormone/parathyroid hormone-related peptide receptor (585 aa).

The signal sequence occupies residues 1–26 (MGAARIAPGLALLLCCPVLSSAYALV). The Extracellular portion of the chain corresponds to 27-184 (DADDVMTKEE…REREVFDRLG (158 aa)). 3 disulfide bridges follow: cysteine 48/cysteine 113, cysteine 104/cysteine 144, and cysteine 127/cysteine 166. Residues 66–100 (DKGWASAPTSGKPRKEKASGKLYPESGEDTGSRHQ) form a disordered region. Asparagine 147, asparagine 157, asparagine 162, and asparagine 172 each carry an N-linked (GlcNAc...) asparagine glycan. Residues 185 to 208 (MIYTVGYSVSLASLTVAVLILAYF) form a helical membrane-spanning segment. Residues 209–215 (RRLHCTR) lie on the Cytoplasmic side of the membrane. A helical membrane pass occupies residues 216-235 (NYIHMHLFLSFMLRAVSIFV). The Extracellular segment spans residues 236-277 (KDAVLYSGATLDEAERLTEEELRAIAQAPLPPVAATSYVGCR). The chain crosses the membrane as a helical span at residues 278-301 (VAVTFFLYFLATNYYWILVEGLYL). Over 302 to 315 (HSLIFMAFFSEKKY) the chain is Cytoplasmic. A helical membrane pass occupies residues 316–337 (LWGFTVFGWGLPAIFVAVWVSV). Residues 338–356 (RATLANTGCWDLSSGNKKW) lie on the Extracellular side of the membrane. The helical transmembrane segment at 357 to 377 (IIQVPILASIVLNFILFINIV) threads the bilayer. The Cytoplasmic portion of the chain corresponds to 378 to 404 (RVLATKLRETNAGRCDTRQQYRKLLKS). The helical transmembrane segment at 405–423 (TLVLMPLFGVHYIVFMATP) threads the bilayer. Topologically, residues 424-435 (YTEVSGTLWQVQ) are extracellular. A helical membrane pass occupies residues 436-458 (MHYEMLFNSFQGFFVAIIYCFCN). At 459–585 (GEVQAEIKKS…LLQEEWETVM (127 aa)) the chain is on the cytoplasmic side. Residues 469–472 (WSRW) carry the Important for interaction with G proteins motif. The residue at position 543 (threonine 543) is a Phosphothreonine.

This sequence belongs to the G-protein coupled receptor 2 family. Homodimer in the absence of bound ligand. Peptide hormone binding leads to dissociation of the homodimer. N-glycosylated.

The protein localises to the cell membrane. Its function is as follows. G-protein-coupled receptor for parathyroid hormone (PTH) and for parathyroid hormone-related peptide (PTHLH). Ligand binding causes a conformation change that triggers signaling via guanine nucleotide-binding proteins (G proteins) and modulates the activity of downstream effectors, such as adenylate cyclase (cAMP). PTH1R is coupled to G(s) G alpha proteins and mediates activation of adenylate cyclase activity. PTHLH dissociates from PTH1R more rapidly than PTH; as consequence, the cAMP response induced by PTHLH decays faster than the response induced by PTH. The sequence is that of Parathyroid hormone/parathyroid hormone-related peptide receptor (PTH1R) from Sus scrofa (Pig).